Here is a 214-residue protein sequence, read N- to C-terminus: Outer-membrane lipoprotein LolB (214 aa).

The first 25 residues, 1–25 (MNNLKRLTKTIFSCFTLSALLLLAG), serve as a signal peptide directing secretion. Residue C26 is the site of N-palmitoyl cysteine attachment. Residue C26 is the site of S-diacylglycerol cysteine attachment.

It belongs to the LolB family. In terms of assembly, monomer.

It is found in the cell outer membrane. Functionally, plays a critical role in the incorporation of lipoproteins in the outer membrane after they are released by the LolA protein. In Shewanella baltica (strain OS155 / ATCC BAA-1091), this protein is Outer-membrane lipoprotein LolB.